Consider the following 846-residue polypeptide: Structure-specific endonuclease subunit SLX4 (846 aa).

Disordered regions lie at residues 1–20, 84–111, 123–164, 283–322, 480–513, 624–690, and 723–751; these read MTDH…VGSA, KAGA…AESM, QPAE…VKKA, RTSK…SKIT, DPTP…SSLL, PPNA…MGSQ, and TLAS…QTRA. Residues 141-153 are compositionally biased toward basic and acidic residues; sequence KPSEKGQKSEKTA. A compositionally biased stretch (polar residues) spans 293-303; the sequence is LDTGTSSTSEG. The segment covering 306–318 has biased composition (basic residues); sequence KRKQTKKAKRSAK. Polar residues-rich tracts occupy residues 657 to 680 and 725 to 751; these read KEIT…SKPT and ASRS…QTRA.

It belongs to the SLX4 family. Forms a heterodimer with SLX1. Phosphorylated in response to DNA damage.

It is found in the nucleus. Functionally, regulatory subunit of the SLX1-SLX4 structure-specific endonuclease that resolves DNA secondary structures generated during DNA repair and recombination. Has endonuclease activity towards branched DNA substrates, introducing single-strand cuts in duplex DNA close to junctions with ss-DNA. The chain is Structure-specific endonuclease subunit SLX4 from Arthroderma otae (strain ATCC MYA-4605 / CBS 113480) (Microsporum canis).